The sequence spans 519 residues: Chloroethene reductive dehalogenase (519 aa).

Residues 1–43 (MSKFHKTISRRDFMKGLGLAGAGIGAVAASAPVFHDIDELVSS) constitute a signal peptide (tat-type signal). 2 4Fe-4S ferredoxin-type domains span residues 388–420 (PTPP…QEDE) and 435–465 (LGYR…LENA). The [4Fe-4S] cluster site is built by C400, C403, C406, C410, C444, C448, C451, and C455.

The protein belongs to the PceA family. The cofactor is [4Fe-4S] cluster. It depends on corrinoid as a cofactor. Predicted to be exported by the Tat system. The position of the signal peptide cleavage has been experimentally proven.

It localises to the cell membrane. The enzyme catalyses chloroethene + AH2 = ethene + chloride + A + H(+). It carries out the reaction (Z)-1,2-dichloroethene + AH2 = chloroethene + chloride + A + H(+). It catalyses the reaction 1,1-dichloroethene + AH2 = chloroethene + chloride + A + H(+). Functionally, catalyzes the reductive dechlorination of chloroethene (or vinyl chloride, VC) to ethene. Can also reduce all dichloroethene (DCE) isomers, but not tetrachloroethene (PCE) or trichloroethene (TCE), at high rates. Reduced methyl viologen can act as the artificial electron donor. The chain is Chloroethene reductive dehalogenase from Dehalococcoides mccartyi (strain VS).